The chain runs to 658 residues: Methionine--tRNA ligase (658 aa).

The short motif at 9–19 (PYANGKAHVGH) is the 'HIGH' region element. 4 residues coordinate Zn(2+): C140, C143, C152, and C156. The short motif at 322 to 326 (TFSKS) is the 'KMSKS' region element. K325 serves as a coordination point for ATP. In terms of domain architecture, tRNA-binding spans 558-658 (DFQKLDIRIG…KEVEPGTRVC (101 aa)).

The protein belongs to the class-I aminoacyl-tRNA synthetase family. MetG type 1 subfamily. In terms of assembly, homodimer. It depends on Zn(2+) as a cofactor.

The protein resides in the cytoplasm. The catalysed reaction is tRNA(Met) + L-methionine + ATP = L-methionyl-tRNA(Met) + AMP + diphosphate. Functionally, is required not only for elongation of protein synthesis but also for the initiation of all mRNA translation through initiator tRNA(fMet) aminoacylation. The protein is Methionine--tRNA ligase of Archaeoglobus fulgidus (strain ATCC 49558 / DSM 4304 / JCM 9628 / NBRC 100126 / VC-16).